The chain runs to 118 residues: Ribonuclease P protein component (118 aa).

It belongs to the RnpA family. Consists of a catalytic RNA component (M1 or rnpB) and a protein subunit.

The enzyme catalyses Endonucleolytic cleavage of RNA, removing 5'-extranucleotides from tRNA precursor.. RNaseP catalyzes the removal of the 5'-leader sequence from pre-tRNA to produce the mature 5'-terminus. It can also cleave other RNA substrates such as 4.5S RNA. The protein component plays an auxiliary but essential role in vivo by binding to the 5'-leader sequence and broadening the substrate specificity of the ribozyme. This is Ribonuclease P protein component from Rickettsia typhi (strain ATCC VR-144 / Wilmington).